Reading from the N-terminus, the 1056-residue chain is Contactin-5 (1056 aa).

A compositionally biased stretch (low complexity) spans 1–14; the sequence is MKADSSSSSSMSSR. Residues 1-33 are disordered; the sequence is MKADSSSSSSMSSRMRLRNSHGVGSSSQDWSPF. The span at 22–31 shows a compositional bias: polar residues; it reads GVGSSSQDWS. 6 consecutive Ig-like C2-type domains span residues 57 to 142, 154 to 240, 258 to 343, 348 to 432, 438 to 519, and 527 to 622; these read PVFI…IVLS, PFSG…RVLS, PKIE…GHLQ, PQWI…AELK, PMFN…AELT, and PMRV…AELL. 3 cysteine pairs are disulfide-bonded: cysteine 81–cysteine 131, cysteine 175–cysteine 227, and cysteine 280–cysteine 327. N-linked (GlcNAc...) asparagine glycans are attached at residues asparagine 96 and asparagine 119. N-linked (GlcNAc...) asparagine glycosylation occurs at asparagine 355. Disulfide bonds link cysteine 369-cysteine 416, cysteine 459-cysteine 507, and cysteine 549-cysteine 606. 2 N-linked (GlcNAc...) asparagine glycosylation sites follow: asparagine 489 and asparagine 496. Fibronectin type-III domains lie at 629–727, 732–829, 834–928, and 933–1023; these read PPGV…TKEA, APAN…SAEG, PPSE…TKKN, and PPGN…TSSG. Residues 711–736 form a disordered region; sequence GTGDPSPPSRAVRTKEAVPSVAPANV. N-linked (GlcNAc...) asparagine glycans are attached at residues asparagine 772, asparagine 887, asparagine 945, and asparagine 958. Asparagine 1035 is lipidated: GPI-anchor amidated asparagine. A propeptide spans 1036 to 1056 (removed in mature form); that stretch reads SPPGLAWTALFLSLMVPSFPL.

The protein belongs to the immunoglobulin superfamily. Contactin family.

It is found in the cell membrane. Contactins mediate cell surface interactions during nervous system development. The protein is Contactin-5 (cntn5) of Danio rerio (Zebrafish).